The primary structure comprises 390 residues: Magnesium-protoporphyrin IX monomethyl ester [oxidative] cyclase (390 aa).

This sequence belongs to the AcsF family. Fe cation is required as a cofactor.

It catalyses the reaction Mg-protoporphyrin IX 13-monomethyl ester + 3 NADPH + 3 O2 + 2 H(+) = 3,8-divinyl protochlorophyllide a + 3 NADP(+) + 5 H2O. It functions in the pathway porphyrin-containing compound metabolism; chlorophyll biosynthesis (light-independent). Catalyzes the formation of the isocyclic ring in chlorophyll biosynthesis. Mediates the cyclase reaction, which results in the formation of divinylprotochlorophyllide (Pchlide) characteristic of all chlorophylls from magnesium-protoporphyrin IX 13-monomethyl ester (MgPMME). This Prochlorococcus marinus subsp. pastoris (strain CCMP1986 / NIES-2087 / MED4) protein is Magnesium-protoporphyrin IX monomethyl ester [oxidative] cyclase.